We begin with the raw amino-acid sequence, 146 residues long: NADH-quinone oxidoreductase subunit A (146 aa).

The next 3 helical transmembrane spans lie at 8–28, 63–83, and 93–113; these read FGSV…GYLT, FYVV…LYPW, and FALI…AYAW.

It belongs to the complex I subunit 3 family. In terms of assembly, NDH-1 is composed of 14 different subunits. Subunits NuoA, H, J, K, L, M, N constitute the membrane sector of the complex.

The protein localises to the cell inner membrane. The enzyme catalyses a quinone + NADH + 5 H(+)(in) = a quinol + NAD(+) + 4 H(+)(out). In terms of biological role, NDH-1 shuttles electrons from NADH, via FMN and iron-sulfur (Fe-S) centers, to quinones in the respiratory chain. The immediate electron acceptor for the enzyme in this species is believed to be a menaquinone. Couples the redox reaction to proton translocation (for every two electrons transferred, four hydrogen ions are translocated across the cytoplasmic membrane), and thus conserves the redox energy in a proton gradient. The sequence is that of NADH-quinone oxidoreductase subunit A from Chlorobium chlorochromatii (strain CaD3).